A 346-amino-acid polypeptide reads, in one-letter code: Phosphoribosylformylglycinamidine cyclo-ligase (346 aa).

The protein belongs to the AIR synthase family.

The protein resides in the cytoplasm. It catalyses the reaction 2-formamido-N(1)-(5-O-phospho-beta-D-ribosyl)acetamidine + ATP = 5-amino-1-(5-phospho-beta-D-ribosyl)imidazole + ADP + phosphate + H(+). It functions in the pathway purine metabolism; IMP biosynthesis via de novo pathway; 5-amino-1-(5-phospho-D-ribosyl)imidazole from N(2)-formyl-N(1)-(5-phospho-D-ribosyl)glycinamide: step 2/2. The polypeptide is Phosphoribosylformylglycinamidine cyclo-ligase (Aliivibrio fischeri (strain ATCC 700601 / ES114) (Vibrio fischeri)).